The sequence spans 514 residues: Transmembrane protein 117 (514 aa).

The Cytoplasmic segment spans residues 1–15 (MGKDFRYYFQHPWSR). A helical transmembrane segment spans residues 16–36 (MIVAYLVIFFNFLIFAEDPVS). Over 37 to 65 (HSQTEANVIVVGNCFSFVTNKYPRGVGWR) the chain is Extracellular. Residues 66–86 (ILKVLLWLLAILIGLIAGKFL) traverse the membrane as a helical segment. Residues 87-110 (FHQRLFGQLLRLKMFREDHGSWMT) lie on the Cytoplasmic side of the membrane. Residues 111–131 (MFFSTILFLFIFSHIYNTILL) form a helical membrane-spanning segment. At 132–154 (MDGNMGAYLITDYMGIRNESFMK) the chain is on the extracellular side. Residues 155-175 (LAAVGTWMGDFVTAWMVTDMM) form a helical membrane-spanning segment. Residues 176–198 (LQDKPYPDWGKSARAFWKKGNVR) lie on the Cytoplasmic side of the membrane. The chain crosses the membrane as a helical span at residues 199–219 (IILFWTVLFTLTSVVVLVITT). The Extracellular portion of the chain corresponds to 220 to 239 (DWISWDKLNRGFLPSDEVSR). The chain crosses the membrane as a helical span at residues 240–260 (AFLASFILVFDLLIVMQDWEF). Topologically, residues 261 to 295 (PHFMGDVDVNLPGLHTPHMQFKIPFFQKIFKEEYR) are cytoplasmic. Residues 296 to 316 (IHITGKWFNYGIIFLVLILDL) traverse the membrane as a helical segment. At 317-394 (NMWKNQIFYK…FIGASLDVKC (78 aa)) the chain is on the extracellular side. N-linked (GlcNAc...) asparagine glycosylation is found at asparagine 353 and asparagine 371. A helical transmembrane segment spans residues 395–415 (LAFVPSLIAFVWFGFFIWFFG). The Cytoplasmic segment spans residues 416 to 514 (RFLKNEQGME…PAASQRMRTN (99 aa)). Residues 430–450 (TYTRMKRKSPSEHSKDMGITR) form a disordered region. Residues 438 to 448 (SPSEHSKDMGI) show a composition bias toward basic and acidic residues. Threonine 453 bears the Phosphothreonine mark. The segment at 494–514 (ESTSEVEAEQEPAASQRMRTN) is disordered.

This sequence belongs to the TMEM117 family.

It is found in the cell membrane. Involved in endoplasmic reticulum (ER) stress-induced cell death pathway. This chain is Transmembrane protein 117 (Tmem117), found in Mus musculus (Mouse).